A 182-amino-acid polypeptide reads, in one-letter code: Inner membrane assembly complex subunit 17 (182 aa).

A mitochondrion-targeting transit peptide spans M1–E45. Residues I46–P107 lie on the Mitochondrial matrix side of the membrane. A helical membrane pass occupies residues L108–W127. The stretch at K128–T158 forms a coiled coil. Residues K128 to W182 are Mitochondrial intermembrane-facing.

Belongs to the INA17 family. Component of the inner membrane assembly (INA) complex, composed of INA17 and INA22. Interacts with a subset of F(1)F(0)-ATP synthase subunits of the F(1)-domain and the peripheral stalk.

It is found in the mitochondrion inner membrane. Functionally, component of the INA complex (INAC) that promotes the biogenesis of mitochondrial F(1)F(0)-ATP synthase. INAC facilitates the assembly of the peripheral stalk and promotes the assembly of the catalytic F(1)-domain with the membrane-embedded F(0)-domain. This is Inner membrane assembly complex subunit 17 from Saccharomyces cerevisiae (strain RM11-1a) (Baker's yeast).